The sequence spans 169 residues: Peptide deformylase (169 aa).

Residues Cys91 and His133 each contribute to the Fe cation site. The active site involves Glu134. His137 contacts Fe cation.

It belongs to the polypeptide deformylase family. Requires Fe(2+) as cofactor.

It carries out the reaction N-terminal N-formyl-L-methionyl-[peptide] + H2O = N-terminal L-methionyl-[peptide] + formate. Functionally, removes the formyl group from the N-terminal Met of newly synthesized proteins. Requires at least a dipeptide for an efficient rate of reaction. N-terminal L-methionine is a prerequisite for activity but the enzyme has broad specificity at other positions. The chain is Peptide deformylase from Escherichia coli (strain SMS-3-5 / SECEC).